Here is a 122-residue protein sequence, read N- to C-terminus: Defensin-like protein 181 (122 aa).

The N-terminal stretch at 1-26 is a signal peptide; the sequence is MERIPSLASLVSLLIIFATVVNQTRA. Intrachain disulfides connect C29–C70, C36–C55, C39–C64, C43–C66, C76–C122, C87–C107, C92–C116, and C96–C118.

This sequence belongs to the DEFL family.

It localises to the secreted. Functionally, confers broad-spectrum resistance to pathogens. The sequence is that of Defensin-like protein 181 (PDF3.1) from Arabidopsis thaliana (Mouse-ear cress).